A 277-amino-acid chain; its full sequence is F41 fimbrial protein (277 aa).

A signal peptide spans 1–22 (MKKTLIALAVAASAAVSGSVMA).

This sequence belongs to the fimbrial K88 protein family.

Its subcellular location is the fimbrium. In terms of biological role, fimbriae (also called pili), polar filaments radiating from the surface of the bacterium to a length of 0.5-1.5 micrometers and numbering 100-300 per cell, enable bacteria to colonize the epithelium of specific host organs. The polypeptide is F41 fimbrial protein (FimF41a) (Escherichia coli).